A 443-amino-acid polypeptide reads, in one-letter code: Protoheme IX farnesyltransferase, mitochondrial (443 aa).

The next 7 membrane-spanning stretches (helical) occupy residues Ala174 to Val194, Leu235 to Val255, Pro257 to Leu277, Ile280 to Trp300, Ala309 to Leu329, Leu364 to Met384, and Leu411 to Arg431.

It belongs to the UbiA prenyltransferase family.

The protein localises to the mitochondrion membrane. It catalyses the reaction heme b + (2E,6E)-farnesyl diphosphate + H2O = Fe(II)-heme o + diphosphate. Converts protoheme IX and farnesyl diphosphate to heme O. The polypeptide is Protoheme IX farnesyltransferase, mitochondrial (COX10) (Pongo abelii (Sumatran orangutan)).